A 413-amino-acid chain; its full sequence is Protein PHR1-LIKE 1 (413 aa).

Disordered stretches follow at residues 171-196 and 208-233; these read SEPN…TPFL and QQQM…SKQR. Polar residues-rich tracts occupy residues 181-191 and 208-231; these read DSSSHNPNSEI and QQQM…ATSK. One can recognise an HTH myb-type domain in the interval 228–288; sequence ATSKQRMRWT…HLQKYRTARY (61 aa). A DNA-binding region (H-T-H motif) is located at residues 259 to 284; it reads PKAVLKLLNNPGLTIYHVKSHLQKYR. Residues 322–342 form a coiled coil region; that stretch reads TQALRLQMEVQKRLHEQLEIQ. Positions 335–340 match the LHEQLE motif; it reads LHEQLE. Positions 363–413 are disordered; that stretch reads QQKIQDNKSSSSEASPKQCNGSFAEVEVGLETLTGDQNESASASRKRVRED. Polar residues-rich tracts occupy residues 369 to 383 and 396 to 405; these read NKSS…QCNG and TGDQNESASA.

The protein belongs to the MYB-CC family. Homodimers and heterodimers. Interacts with MED25. Does not interact with PHL2 or PHL3. In terms of tissue distribution, expressed in shoots and roots.

The protein resides in the nucleus. In terms of biological role, transcription factor acting as central integrator of phosphate starvation responses. Regulates FER1 expression upon phosphate starvation, linking iron and phosphate homeostasis. In Arabidopsis thaliana (Mouse-ear cress), this protein is Protein PHR1-LIKE 1 (PHL1).